The chain runs to 89 residues: Small ribosomal subunit protein uS15 (89 aa).

It belongs to the universal ribosomal protein uS15 family. In terms of assembly, part of the 30S ribosomal subunit. Forms a bridge to the 50S subunit in the 70S ribosome, contacting the 23S rRNA.

In terms of biological role, one of the primary rRNA binding proteins, it binds directly to 16S rRNA where it helps nucleate assembly of the platform of the 30S subunit by binding and bridging several RNA helices of the 16S rRNA. Its function is as follows. Forms an intersubunit bridge (bridge B4) with the 23S rRNA of the 50S subunit in the ribosome. In Hamiltonella defensa subsp. Acyrthosiphon pisum (strain 5AT), this protein is Small ribosomal subunit protein uS15.